The following is a 699-amino-acid chain: DNA ligase (699 aa).

The segment at 1–29 (MSDADVDAESNPYLRDPPTEFEPAESLSR) is disordered. NAD(+) contacts are provided by residues 60 to 64 (DAAYD), 108 to 109 (SI), and glutamate 137. Lysine 139 serves as the catalytic N6-AMP-lysine intermediate. NAD(+) contacts are provided by arginine 160, glutamate 196, lysine 311, and lysine 335. Zn(2+)-binding residues include cysteine 425, cysteine 428, cysteine 441, and cysteine 447. Positions 613–666 (SGGDELDGLTFVVTGTLAASRSDVTELVESHGGNVTGSVSGNTDYLVVGENPGR) constitute a BRCT domain.

This sequence belongs to the NAD-dependent DNA ligase family. LigA subfamily. The cofactor is Mg(2+). Mn(2+) serves as cofactor.

The catalysed reaction is NAD(+) + (deoxyribonucleotide)n-3'-hydroxyl + 5'-phospho-(deoxyribonucleotide)m = (deoxyribonucleotide)n+m + AMP + beta-nicotinamide D-nucleotide.. Displays maximal in vitro activity at high salt levels. DNA ligase that catalyzes the formation of phosphodiester linkages between 5'-phosphoryl and 3'-hydroxyl groups in double-stranded DNA using NAD as a coenzyme and as the energy source for the reaction. It is essential for DNA replication and repair of damaged DNA. The sequence is that of DNA ligase from Haloferax volcanii (strain ATCC 29605 / DSM 3757 / JCM 8879 / NBRC 14742 / NCIMB 2012 / VKM B-1768 / DS2) (Halobacterium volcanii).